Reading from the N-terminus, the 209-residue chain is Uracil phosphoribosyltransferase (209 aa).

Residues Arg79, Arg104, and 131 to 139 (DPMLATGGS) each bind 5-phospho-alpha-D-ribose 1-diphosphate. Uracil contacts are provided by residues Ile194 and 199 to 201 (GDA). 5-phospho-alpha-D-ribose 1-diphosphate is bound at residue Asp200.

Belongs to the UPRTase family. Mg(2+) serves as cofactor.

It catalyses the reaction UMP + diphosphate = 5-phospho-alpha-D-ribose 1-diphosphate + uracil. The protein operates within pyrimidine metabolism; UMP biosynthesis via salvage pathway; UMP from uracil: step 1/1. Its activity is regulated as follows. Allosterically activated by GTP. Catalyzes the conversion of uracil and 5-phospho-alpha-D-ribose 1-diphosphate (PRPP) to UMP and diphosphate. This is Uracil phosphoribosyltransferase from Natranaerobius thermophilus (strain ATCC BAA-1301 / DSM 18059 / JW/NM-WN-LF).